A 432-amino-acid polypeptide reads, in one-letter code: Adenylosuccinate synthetase (432 aa).

GTP contacts are provided by residues 13 to 19 (GDEGKGK) and 41 to 43 (GHT). D14 acts as the Proton acceptor in catalysis. Residues D14 and G41 each coordinate Mg(2+). Residues 14-17 (DEGK), 39-42 (NAGH), T130, R144, Q225, T240, and R304 each bind IMP. H42 (proton donor) is an active-site residue. Residue 300–306 (ATTGRRR) participates in substrate binding. Residues R306, 332-334 (KLD), and 415-417 (STG) each bind GTP.

The protein belongs to the adenylosuccinate synthetase family. Homodimer. The cofactor is Mg(2+).

Its subcellular location is the cytoplasm. The enzyme catalyses IMP + L-aspartate + GTP = N(6)-(1,2-dicarboxyethyl)-AMP + GDP + phosphate + 2 H(+). It participates in purine metabolism; AMP biosynthesis via de novo pathway; AMP from IMP: step 1/2. Plays an important role in the de novo pathway of purine nucleotide biosynthesis. Catalyzes the first committed step in the biosynthesis of AMP from IMP. This chain is Adenylosuccinate synthetase, found in Salmonella paratyphi C (strain RKS4594).